Reading from the N-terminus, the 382-residue chain is Chaperone protein DnaJ (382 aa).

The J domain occupies 5-70 (DYYELLGVQK…EKRAAYDRYG (66 aa)). A CR-type zinc finger spans residues 146-224 (GAEKEISFRK…CHGEGRVRRT (79 aa)). Positions 159, 162, 176, 179, 198, 201, 212, and 215 each coordinate Zn(2+). CXXCXGXG motif repeat units lie at residues 159-166 (CERCDGSG), 176-183 (CPTCRGAG), 198-205 (CPTCGGMG), and 212-219 (CTVCHGEG). Positions 230 to 250 (RIPPGVDNGSRLRSSGNGEAG) are disordered.

It belongs to the DnaJ family. As to quaternary structure, homodimer. It depends on Zn(2+) as a cofactor.

The protein localises to the cytoplasm. In terms of biological role, participates actively in the response to hyperosmotic and heat shock by preventing the aggregation of stress-denatured proteins and by disaggregating proteins, also in an autonomous, DnaK-independent fashion. Unfolded proteins bind initially to DnaJ; upon interaction with the DnaJ-bound protein, DnaK hydrolyzes its bound ATP, resulting in the formation of a stable complex. GrpE releases ADP from DnaK; ATP binding to DnaK triggers the release of the substrate protein, thus completing the reaction cycle. Several rounds of ATP-dependent interactions between DnaJ, DnaK and GrpE are required for fully efficient folding. Also involved, together with DnaK and GrpE, in the DNA replication of plasmids through activation of initiation proteins. The chain is Chaperone protein DnaJ from Opitutus terrae (strain DSM 11246 / JCM 15787 / PB90-1).